The following is a 316-amino-acid chain: 4-hydroxy-3-methylbut-2-enyl diphosphate reductase (316 aa).

Position 12 (C12) interacts with [4Fe-4S] cluster. The (2E)-4-hydroxy-3-methylbut-2-enyl diphosphate site is built by H43 and H81. 2 residues coordinate dimethylallyl diphosphate: H43 and H81. H43 and H81 together coordinate isopentenyl diphosphate. C103 contributes to the [4Fe-4S] cluster binding site. H131 serves as a coordination point for (2E)-4-hydroxy-3-methylbut-2-enyl diphosphate. A dimethylallyl diphosphate-binding site is contributed by H131. H131 serves as a coordination point for isopentenyl diphosphate. E133 (proton donor) is an active-site residue. T170 provides a ligand contact to (2E)-4-hydroxy-3-methylbut-2-enyl diphosphate. Position 198 (C198) interacts with [4Fe-4S] cluster. The (2E)-4-hydroxy-3-methylbut-2-enyl diphosphate site is built by S226, N228, and S271. The dimethylallyl diphosphate site is built by S226, N228, and S271. 3 residues coordinate isopentenyl diphosphate: S226, N228, and S271.

The protein belongs to the IspH family. It depends on [4Fe-4S] cluster as a cofactor.

The catalysed reaction is isopentenyl diphosphate + 2 oxidized [2Fe-2S]-[ferredoxin] + H2O = (2E)-4-hydroxy-3-methylbut-2-enyl diphosphate + 2 reduced [2Fe-2S]-[ferredoxin] + 2 H(+). It carries out the reaction dimethylallyl diphosphate + 2 oxidized [2Fe-2S]-[ferredoxin] + H2O = (2E)-4-hydroxy-3-methylbut-2-enyl diphosphate + 2 reduced [2Fe-2S]-[ferredoxin] + 2 H(+). It participates in isoprenoid biosynthesis; dimethylallyl diphosphate biosynthesis; dimethylallyl diphosphate from (2E)-4-hydroxy-3-methylbutenyl diphosphate: step 1/1. It functions in the pathway isoprenoid biosynthesis; isopentenyl diphosphate biosynthesis via DXP pathway; isopentenyl diphosphate from 1-deoxy-D-xylulose 5-phosphate: step 6/6. Functionally, catalyzes the conversion of 1-hydroxy-2-methyl-2-(E)-butenyl 4-diphosphate (HMBPP) into a mixture of isopentenyl diphosphate (IPP) and dimethylallyl diphosphate (DMAPP). Acts in the terminal step of the DOXP/MEP pathway for isoprenoid precursor biosynthesis. The polypeptide is 4-hydroxy-3-methylbut-2-enyl diphosphate reductase (Bacillus anthracis (strain A0248)).